The chain runs to 374 residues: F-box/kelch-repeat protein At2g24250 (374 aa).

The F-box domain maps to 14–63; sequence PDWSQLPEELLHIISTHLEDHYFDAVHARSVCRSWRSTFPFPSSLLRQSY. 2 Kelch repeats span residues 100–150 and 249–301; these read SEYF…PLGH and NFLV…LGNF.

The sequence is that of F-box/kelch-repeat protein At2g24250 from Arabidopsis thaliana (Mouse-ear cress).